A 379-amino-acid chain; its full sequence is Chaperone protein DnaJ 2 (379 aa).

The J domain maps to 4 to 68; sequence DYYAVLGVRR…QKKQVYDLGG (65 aa). The CR-type zinc-finger motif lies at 130-212; that stretch reads GTTKDIQVDT…CAGDGRVPSR (83 aa). Residues C143, C146, C160, C163, C186, C189, C200, and C203 each contribute to the Zn(2+) site. 4 CXXCXGXG motif repeats span residues 143–150, 160–167, 186–193, and 200–207; these read CNTCNGEG, CDMCRGRG, CPQCQGFA, and CPECAGDG. The interval 351–379 is disordered; the sequence is RGEERPTGQFQPGQQGLFSRLKDAFNGRS. Residues 358-367 are compositionally biased toward polar residues; that stretch reads GQFQPGQQGL. A compositionally biased stretch (basic and acidic residues) spans 370 to 379; sequence RLKDAFNGRS.

It belongs to the DnaJ family. Homodimer. The cofactor is Zn(2+).

The protein resides in the cytoplasm. Its function is as follows. Participates actively in the response to hyperosmotic and heat shock by preventing the aggregation of stress-denatured proteins and by disaggregating proteins, also in an autonomous, DnaK-independent fashion. Unfolded proteins bind initially to DnaJ; upon interaction with the DnaJ-bound protein, DnaK hydrolyzes its bound ATP, resulting in the formation of a stable complex. GrpE releases ADP from DnaK; ATP binding to DnaK triggers the release of the substrate protein, thus completing the reaction cycle. Several rounds of ATP-dependent interactions between DnaJ, DnaK and GrpE are required for fully efficient folding. Also involved, together with DnaK and GrpE, in the DNA replication of plasmids through activation of initiation proteins. In Streptomyces albus G, this protein is Chaperone protein DnaJ 2.